Consider the following 394-residue polypeptide: NADH dehydrogenase [ubiquinone] iron-sulfur protein 2 (394 aa).

A compositionally biased stretch (polar residues) spans 1-16; the sequence is MTTKNRQIKNFTSNFG. The interval 1 to 22 is disordered; it reads MTTKNRQIKNFTSNFGPQHPAA.

The protein belongs to the complex I 49 kDa subunit family. Complex I is composed of about 45 different subunits. This is a component of the iron-sulfur (IP) fragment of the enzyme.

It localises to the mitochondrion. It carries out the reaction a ubiquinone + NADH + 5 H(+)(in) = a ubiquinol + NAD(+) + 4 H(+)(out). Functionally, core subunit of the mitochondrial membrane respiratory chain NADH dehydrogenase (Complex I) that is believed to belong to the minimal assembly required for catalysis. Complex I functions in the transfer of electrons from NADH to the respiratory chain. The immediate electron acceptor for the enzyme is believed to be ubiquinone. Component of the iron-sulfur (IP) fragment of the enzyme. The chain is NADH dehydrogenase [ubiquinone] iron-sulfur protein 2 (NAD7) from Nicotiana sylvestris (Wood tobacco).